A 1302-amino-acid chain; its full sequence is 1-phosphatidylinositol 4,5-bisphosphate phosphodiesterase gamma-1 (1302 aa).

Position 2 is an N-acetylalanine (Ala-2). Residues 27–142 enclose the PH 1 domain; it reads RSLEVGTVMT…WIKGLTWLME (116 aa). The EF-hand domain occupies 152–187; the sequence is QIERWLRKQFYSVDRNREDRISAKDLKNMLSQVNYR. Positions 165, 167, 169, 171, and 176 each coordinate Ca(2+). Residues 320 to 464 form the PI-PLC X-box domain; that stretch reads DTMNNPLSHY…LRRKILIKHK (145 aa). Active-site residues include His-335 and His-380. In terms of domain architecture, PH 2; first part spans 489–523; the sequence is SIKNGILYLEDPVNHEWYPHYFVLTSSKIYYSEET. A Phosphotyrosine modification is found at Tyr-506. The segment at 522–545 is disordered; that stretch reads ETSSDQGNEDEEEPKEASSSTELH. 2 consecutive SH2 domains span residues 550–657 and 668–756; these read WFHG…SEPV and WYHA…RYPI. Phosphotyrosine; by SYK is present on Tyr-771. A Phosphotyrosine modification is found at Tyr-775. Position 783 is a phosphotyrosine; by ITK, SYK and TXK (Tyr-783). The SH3 domain occupies 791-851; sequence TFKCAVKALF…PSNYVEEMIN (61 aa). The PH 2; second part domain occupies 895 to 931; sequence FVFSISMPSVAQWSLDVAADSQEELQDWVKKIREVAQ. The PI-PLC Y-box domain maps to 953–1070; it reads LSELVVYCRP…GYVLQPSTMR (118 aa). Tyr-977 carries the post-translational modification Phosphotyrosine. The region spanning 1071–1194 is the C2 domain; it reads DEAFDPFDKS…TGYRAVPLKN (124 aa). Phosphoserine occurs at positions 1221, 1227, 1233, and 1248. Residue Tyr-1253 is modified to Phosphotyrosine. Ser-1263 carries the post-translational modification Phosphoserine.

Interacts (via SH2 domain) with FGFR1, FGFR2, FGFR3 and FGFR4 (phosphorylated). Interacts with RALGPS1. Interacts (via SH2 domains) with VIL1 (phosphorylated at C-terminus tyrosine phosphorylation sites). Interacts (via SH2 domain) with RET. Interacts with AGAP2 via its SH3 domain. Interacts with LAT (phosphorylated) upon TCR activation. Interacts (via SH3 domain) with the Pro-rich domain of TNK1. Associates with BLNK, VAV1, GRB2 and NCK1 in a B-cell antigen receptor-dependent fashion. Interacts with CBLB in activated T-cells; which inhibits phosphorylation. Interacts with SHB. Interacts (via SH3 domain) with the Arg/Gly-rich-flanked Pro-rich domains of KHDRBS1/SAM68. This interaction is selectively regulated by arginine methylation of KHDRBS1/SAM68. Interacts with INPP5D/SHIP1, THEMIS and CLNK. Interacts with FLT4 and KIT. Interacts with AXL. Interacts with SYK; activates PLCG1. Interacts with FLT1 (tyrosine-phosphorylated). Interacts (via SH2 domain) with PDGFRA and PDGFRB (tyrosine phosphorylated). Interacts with PIP5K1C. Interacts with NTRK1 and NTRK2 (phosphorylated upon ligand-binding). Interacts with TESPA1. Interacts with GRB2, LAT and THEMIS upon TCR activation in thymocytes; the association is weaker in the absence of TESPA1. Interacts (via C-terminal proline-rich domain (PRD)) with PLCG1 (via SH3 domain); this interaction leads to guanine nucleotide exchange from PlCG1 to DNM1 and enhances DNM1-dependent endocytosis. Requires Ca(2+) as cofactor. Post-translationally, tyrosine phosphorylated in response to signaling via activated FLT3, KIT and PDGFRA. Tyrosine phosphorylated by activated FGFR1, FGFR2, FGFR3 and FGFR4. Tyrosine phosphorylated by activated FLT1 and KDR. Tyrosine phosphorylated by activated PDGFRB. The receptor-mediated activation of PLCG1 involves its phosphorylation by tyrosine kinases in response to ligation of a variety of growth factor receptors and immune system receptors. For instance, SYK phosphorylates and activates PLCG1 in response to ligation of the B-cell receptor. Phosphorylated by ITK and TXK on Tyr-783 upon TCR activation in T-cells. May be dephosphorylated by PTPRJ. In terms of processing, ubiquitinated by CBLB in activated T-cells.

The protein resides in the cell projection. It localises to the lamellipodium. Its subcellular location is the ruffle. It carries out the reaction a 1,2-diacyl-sn-glycero-3-phospho-(1D-myo-inositol-4,5-bisphosphate) + H2O = 1D-myo-inositol 1,4,5-trisphosphate + a 1,2-diacyl-sn-glycerol + H(+). The enzyme catalyses a 1,2-diacyl-sn-glycero-3-phospho-(1D-myo-inositol) + H2O = 1D-myo-inositol 1-phosphate + a 1,2-diacyl-sn-glycerol + H(+). Activated by phosphorylation on tyrosine residues. Its function is as follows. Mediates the production of the second messenger molecules diacylglycerol (DAG) and inositol 1,4,5-trisphosphate (IP3). Plays an important role in the regulation of intracellular signaling cascades. Becomes activated in response to ligand-mediated activation of receptor-type tyrosine kinases, such as PDGFRA, PDGFRB, EGFR, FGFR1, FGFR2, FGFR3 and FGFR4. Plays a role in actin reorganization and cell migration. Guanine nucleotide exchange factor that binds the GTPase DNM1 and catalyzes the dissociation of GDP, allowing a GTP molecule to bind in its place, therefore enhancing DNM1-dependent endocytosis. This chain is 1-phosphatidylinositol 4,5-bisphosphate phosphodiesterase gamma-1, found in Mus musculus (Mouse).